Here is a 505-residue protein sequence, read N- to C-terminus: Gap junction alpha-10 protein (505 aa).

The Cytoplasmic segment spans residues methionine 1–serine 16. A helical transmembrane segment spans residues histidine 17 to leucine 37. Topologically, residues glycine 38–arginine 76 are extracellular. The chain crosses the membrane as a helical span at residues phenylalanine 77–leucine 97. Residues tyrosine 98 to serine 165 are Cytoplasmic-facing. The helical transmembrane segment at valine 166 to isoleucine 186 threads the bilayer. Residues tyrosine 187 to threonine 209 are Extracellular-facing. A helical transmembrane segment spans residues isoleucine 210–isoleucine 230. At phenylalanine 231–tyrosine 505 the chain is on the cytoplasmic side. Over residues threonine 371–leucine 383 the composition is skewed to polar residues. A disordered region spans residues threonine 371–proline 491. Residues methionine 437–aspartate 446 are compositionally biased toward basic and acidic residues. Residues serine 447–phenylalanine 460 show a composition bias toward low complexity.

It belongs to the connexin family. Alpha-type (group II) subfamily. In terms of assembly, a connexon is composed of a hexamer of connexins. As to expression, low levels were detected in skin, heart, kidney, testis, ovary, intestine. Expression not detected in brain, sciatic nerve or liver. According to PubMed:15147297 expression is detected only in horizontal cells in the inner nuclear layer of the retina and not in other neurons of the central nervous system or tissues. Detected in the outer plexiform layer of the retina (at protein level).

Its subcellular location is the cell membrane. It is found in the cell junction. The protein resides in the gap junction. Functionally, one gap junction consists of a cluster of closely packed pairs of transmembrane channels, the connexons, through which materials of low MW diffuse from one cell to a neighboring cell. Involved in tracer coupling between horizontal cells of the retina. May play a role in the regulation of horizontal cell patterning. The sequence is that of Gap junction alpha-10 protein (Gja10) from Mus musculus (Mouse).